A 221-amino-acid polypeptide reads, in one-letter code: PKHD-type hydroxylase PMN2A_0775 (221 aa).

The Fe2OG dioxygenase domain occupies 80 to 174; that stretch reads LIHGVMFTQS…RHVCVGWIQS (95 aa). His98, Asp100, and His155 together coordinate Fe cation. A 2-oxoglutarate-binding site is contributed by Arg165.

Fe(2+) serves as cofactor. Requires L-ascorbate as cofactor.

This chain is PKHD-type hydroxylase PMN2A_0775, found in Prochlorococcus marinus (strain NATL2A).